The primary structure comprises 586 residues: Pescadillo homolog (586 aa).

Positions 1–54 are required for 28S ribosomal RNA processing; the sequence is MGGLEKKKYERGSATNYITRNKARKKLQLSLPDFRRLCILKGIYPHEPKHKKKV. Residues 1-257 are sufficient for nucleolar localization; sequence MGGLEKKKYE…PKIESQAQAE (257 aa). The residue at position 98 (K98) is an N6-acetyllysine. The sufficient for interaction with MAP1B stretch occupies residues 305–414; that stretch reads VTAQEEDRRK…LLLPVAEYFP (110 aa). The BRCT domain maps to 321–414; the sequence is KHKKLFEGLK…LLLPVAEYFP (94 aa). The disordered stretch occupies residues 447–508; sequence GEDPGNLEEE…QQRLGGKKPQ (62 aa). Residues 451–491 show a composition bias toward acidic residues; it reads GNLEEEEEDEDDEGDDSEGDGDVAVENEEEVVEAESEEEEE. K515 participates in a covalent cross-link: Glycyl lysine isopeptide (Lys-Gly) (interchain with G-Cter in SUMO1); alternate. K515 participates in a covalent cross-link: Glycyl lysine isopeptide (Lys-Gly) (interchain with G-Cter in SUMO2); alternate. The interval 537 to 586 is required for 28S ribosomal RNA processing; sequence MMKKREKYLYQKIMFGKRRKIREANKLAEKRKAHDDAVRSEKKAKRTRPV. Positions 562 to 577 are enriched in basic and acidic residues; it reads KLAEKRKAHDDAVRSE. The segment at 562–586 is disordered; the sequence is KLAEKRKAHDDAVRSEKKAKRTRPV.

The protein belongs to the pescadillo family. As to quaternary structure, component of the PeBoW complex, composed of BOP1, PES1 and WDR12. The complex is held together by BOP1, which interacts with PES1 via its N-terminal domain and with WDR12 via a high-affinity interaction between the seven-bladed beta-propeller domains of the 2 proteins. The PeBoW complex associates with the 66S pre-ribosome. The PeBoW complex also associates with DDX27, PES1 interacts directly with DDX27. Interacts with IRS1 and UBTF. May interact with MAP1B. Sumoylated.

The protein resides in the nucleus. Its subcellular location is the nucleolus. It localises to the nucleoplasm. It is found in the chromosome. Component of the PeBoW complex, which is required for maturation of 28S and 5.8S ribosomal RNAs and formation of the 60S ribosome. This is Pescadillo homolog (Pes1) from Rattus norvegicus (Rat).